Consider the following 309-residue polypeptide: Protoheme IX farnesyltransferase (309 aa).

9 helical membrane passes run 30–49 (VMSL…PGGV), 53–75 (IGFT…NMWY), 98–118 (AGEA…MLGL), 123–143 (VAAG…SMWL), 151–171 (IVIG…AVTG), 178–198 (VLMF…LALF), 224–244 (ILIY…TEVA), 247–267 (VYLI…YDIW), and 285–305 (VFKF…LDAI).

This sequence belongs to the UbiA prenyltransferase family. Protoheme IX farnesyltransferase subfamily. Interacts with CtaA.

The protein resides in the cell inner membrane. The enzyme catalyses heme b + (2E,6E)-farnesyl diphosphate + H2O = Fe(II)-heme o + diphosphate. The protein operates within porphyrin-containing compound metabolism; heme O biosynthesis; heme O from protoheme: step 1/1. Converts heme B (protoheme IX) to heme O by substitution of the vinyl group on carbon 2 of heme B porphyrin ring with a hydroxyethyl farnesyl side group. In Jannaschia sp. (strain CCS1), this protein is Protoheme IX farnesyltransferase.